An 814-amino-acid chain; its full sequence is E3 ubiquitin-protein ligase TRIM71 (814 aa).

Residues 12-76 form an RING-type zinc finger; that stretch reads CPLCKEMCVS…SLQLRCPVCD (65 aa). The segment at 111-146 is disordered; it reads QQQSNGGRTASNRQRSASCSSSGLLRRAPPSQSEPR. Over residues 120-138 the composition is skewed to low complexity; the sequence is ASNRQRSASCSSSGLLRRA. The segment at 142–189 adopts a B box-type 1; atypical zinc-finger fold; sequence QSEPRCSSCDDGNGASSHCLDCQENLCDNCLRAHQRVRLTKDHFIERF. Residues C147, C150, C171, H175, C224, H227, C247, and H252 each contribute to the Zn(2+) site. Residues 219–260 form a B box-type 2 zinc finger; it reads PERLYCQQHDEEVLHFYCDSCSVPICRECTMGRHAGHSFVYL. Positions 282 to 370 form a coiled coil; sequence RQAIQLSLEQ…INAVQQVLEE (89 aa). One copy of the Filamin repeat lies at 425–526; the sequence is SSGAFAALTK…IENSPFKVNV (102 aa). 6 NHL repeats span residues 539–582, 586–629, 633–676, 680–723, 727–770, and 774–814; these read TLSF…FKPC, HHKF…FTFE, LLKF…FGPD, LNKY…IKPD, AHFL…FEPN, and LCKF…ILAF.

Belongs to the TRIM/RBCC family.

Its subcellular location is the cytoplasm. The protein resides in the P-body. It catalyses the reaction S-ubiquitinyl-[E2 ubiquitin-conjugating enzyme]-L-cysteine + [acceptor protein]-L-lysine = [E2 ubiquitin-conjugating enzyme]-L-cysteine + N(6)-ubiquitinyl-[acceptor protein]-L-lysine.. The protein operates within protein modification; protein ubiquitination. In terms of biological role, E3 ubiquitin-protein ligase that cooperates with the microRNAs (miRNAs) machinery and promotes embryonic stem cells proliferation and maintenance. Binds to miRNAs and participates in post-transcriptional repression of transcripts. Required to maintain proliferation and prevent premature differentiation of neural progenitor cells during early neural development. The polypeptide is E3 ubiquitin-protein ligase TRIM71 (trim71) (Xenopus tropicalis (Western clawed frog)).